A 496-amino-acid polypeptide reads, in one-letter code: Probable malate:quinone oxidoreductase (496 aa).

The protein belongs to the MQO family. FAD is required as a cofactor.

The enzyme catalyses (S)-malate + a quinone = a quinol + oxaloacetate. It participates in carbohydrate metabolism; tricarboxylic acid cycle; oxaloacetate from (S)-malate (quinone route): step 1/1. The polypeptide is Probable malate:quinone oxidoreductase (Prochlorococcus marinus (strain NATL1A)).